The sequence spans 239 residues: Ribosomal RNA small subunit methyltransferase G (239 aa).

Residues Gly78, Phe83, 129–130, and Arg148 each bind S-adenosyl-L-methionine; that span reads AE.

Belongs to the methyltransferase superfamily. RNA methyltransferase RsmG family.

The protein localises to the cytoplasm. In terms of biological role, specifically methylates the N7 position of a guanine in 16S rRNA. This Clostridium tetani (strain Massachusetts / E88) protein is Ribosomal RNA small subunit methyltransferase G.